Reading from the N-terminus, the 1274-residue chain is Mediator of RNA polymerase II transcription subunit 14 (1274 aa).

Disordered stretches follow at residues 1–40 (MENGHMNGVRTHHDRNSWTNGVNGGVAKREGSPDKGKAHA), 1056–1142 (LVGT…LHTQ), and 1155–1274 (AQRQ…VVID). Residues 27–37 (AKREGSPDKGK) are compositionally biased toward basic and acidic residues. Residues 1075-1085 (QDLQQGPQKTP) show a composition bias toward polar residues. Over residues 1090 to 1104 (AAQAAQAAQAAQAAQ) the composition is skewed to low complexity. Residues 1108–1119 (PQRPKQQPPTPS) are compositionally biased toward pro residues. 3 stretches are compositionally biased toward low complexity: residues 1120 to 1142 (QPQQQHRNVNQPQAQAQPQLHTQ), 1155 to 1172 (AQRQAQARANNSSNNNNT), and 1183 to 1252 (PQQR…PQGQ). Over residues 1253–1265 (PGHGGGANGGMGG) the composition is skewed to gly residues.

The protein belongs to the Mediator complex subunit 14 family. Component of the Mediator complex.

The protein localises to the nucleus. In terms of biological role, component of the Mediator complex, a coactivator involved in the regulated transcription of nearly all RNA polymerase II-dependent genes. Mediator functions as a bridge to convey information from gene-specific regulatory proteins to the basal RNA polymerase II transcription machinery. Mediator is recruited to promoters by direct interactions with regulatory proteins and serves as a scaffold for the assembly of a functional preinitiation complex with RNA polymerase II and the general transcription factors. The protein is Mediator of RNA polymerase II transcription subunit 14 (rgr1) of Neurospora crassa (strain ATCC 24698 / 74-OR23-1A / CBS 708.71 / DSM 1257 / FGSC 987).